The following is a 104-amino-acid chain: Proteasome subunit beta type-8 (104 aa).

The protein belongs to the peptidase T1B family. In terms of assembly, the 26S proteasome consists of a 20S proteasome core and two 19S regulatory subunits. The 20S proteasome core is composed of 28 subunits that are arranged in four stacked rings, resulting in a barrel-shaped structure. The two end rings are each formed by seven alpha subunits, and the two central rings are each formed by seven beta subunits. The catalytic chamber with the active sites is on the inside of the barrel. Component of the immunoproteasome, where it displaces the equivalent housekeeping subunit PSMB5. Component of the spermatoproteasome, a form of the proteasome specifically found in testis. Directly interacts with POMP.

It localises to the cytoplasm. The protein localises to the nucleus. The catalysed reaction is Cleavage of peptide bonds with very broad specificity.. In terms of biological role, the proteasome is a multicatalytic proteinase complex which is characterized by its ability to cleave peptides with Arg, Phe, Tyr, Leu, and Glu adjacent to the leaving group at neutral or slightly basic pH. The proteasome has an ATP-dependent proteolytic activity. This subunit is involved in antigen processing to generate class I binding peptides. May participate in the generation of spliced peptides resulting from the ligation of two separate proteasomal cleavage products that are not contiguous in the parental protein. Required for adipocyte differentiation. The protein is Proteasome subunit beta type-8 (PSMB8) of Sus scrofa (Pig).